Reading from the N-terminus, the 229-residue chain is Potassium/proton antiporter CemA (229 aa).

The next 3 helical transmembrane spans lie at 7 to 27 (FTPL…SLLF), 107 to 127 (ILHF…SIFG), and 189 to 209 (IISG…KYWI).

The protein belongs to the CemA family.

Its subcellular location is the plastid. The protein localises to the chloroplast inner membrane. It carries out the reaction K(+)(in) + H(+)(out) = K(+)(out) + H(+)(in). Its function is as follows. Contributes to K(+)/H(+) antiport activity by supporting proton efflux to control proton extrusion and homeostasis in chloroplasts in a light-dependent manner to modulate photosynthesis. Prevents excessive induction of non-photochemical quenching (NPQ) under continuous-light conditions. Indirectly promotes efficient inorganic carbon uptake into chloroplasts. The polypeptide is Potassium/proton antiporter CemA (Guizotia abyssinica (Niger)).